Reading from the N-terminus, the 203-residue chain is Holliday junction branch migration complex subunit RuvA (203 aa).

The segment at 1 to 64 (MIGRLRGIIL…EDAQLLYGFN (64 aa)) is domain I. Residues 65 to 142 (NKQERTLFKE…KGLHGDLFTP (78 aa)) are domain II. The flexible linker stretch occupies residues 143–154 (AADLVLTSPAGP). A domain III region spans residues 155 to 203 (TADDAEQEAVAALVALGYKPQEASRMVSKIARPDANSETLIREALRAAL).

The protein belongs to the RuvA family. Homotetramer. Forms an RuvA(8)-RuvB(12)-Holliday junction (HJ) complex. HJ DNA is sandwiched between 2 RuvA tetramers; dsDNA enters through RuvA and exits via RuvB. An RuvB hexamer assembles on each DNA strand where it exits the tetramer. Each RuvB hexamer is contacted by two RuvA subunits (via domain III) on 2 adjacent RuvB subunits; this complex drives branch migration. In the full resolvosome a probable DNA-RuvA(4)-RuvB(12)-RuvC(2) complex forms which resolves the HJ.

Its subcellular location is the cytoplasm. Functionally, the RuvA-RuvB-RuvC complex processes Holliday junction (HJ) DNA during genetic recombination and DNA repair, while the RuvA-RuvB complex plays an important role in the rescue of blocked DNA replication forks via replication fork reversal (RFR). RuvA specifically binds to HJ cruciform DNA, conferring on it an open structure. The RuvB hexamer acts as an ATP-dependent pump, pulling dsDNA into and through the RuvAB complex. HJ branch migration allows RuvC to scan DNA until it finds its consensus sequence, where it cleaves and resolves the cruciform DNA. The polypeptide is Holliday junction branch migration complex subunit RuvA (Klebsiella pneumoniae (strain 342)).